The sequence spans 371 residues: Putative glutamate--cysteine ligase 2 (371 aa).

It belongs to the glutamate--cysteine ligase type 2 family. YbdK subfamily.

The enzyme catalyses L-cysteine + L-glutamate + ATP = gamma-L-glutamyl-L-cysteine + ADP + phosphate + H(+). In terms of biological role, ATP-dependent carboxylate-amine ligase which exhibits weak glutamate--cysteine ligase activity. The protein is Putative glutamate--cysteine ligase 2 of Burkholderia lata (strain ATCC 17760 / DSM 23089 / LMG 22485 / NCIMB 9086 / R18194 / 383).